The primary structure comprises 287 residues: Gliotoxin thiomethyltransferase GtmA (287 aa).

S-adenosyl-L-methionine contacts are provided by Thr27 and Ala54. Cys55 and Cys80 are disulfide-bonded. 6 residues coordinate S-adenosyl-L-methionine: Asp82, Met87, Asn109, Ala110, Ala126, and Arg248.

It belongs to the class I-like SAM-binding methyltransferase superfamily.

The protein localises to the cytoplasm. The catalysed reaction is a thiol + S-adenosyl-L-methionine = a methyl thioether + S-adenosyl-L-homocysteine + H(+). In terms of biological role, S-methyltransferase that catalyzes the irreversible conversion of the secondary metabolite gliotoxin to bis(methylthio)gliotoxin (BmGT). Gliotoxin, a member of the epipolythiodioxopiperazine (ETP) class of toxins, is characterized by a disulfide bridged cyclic dipeptide. Its thiol groups are essential for bioactivity, as they conjugate to sulfur-containing proteins, disturb the intracellular redox equilibrium, and generate reactive oxygen species by cycling between reduced and oxidized states. The enzyme prevents self-intoxication of the fungus by irreversible conversion of the toxic gliotoxin to a biologically inactive bis-thiomethylated derivative. Appears to negatively regulate gliotoxin biosynthesis. This is Gliotoxin thiomethyltransferase GtmA from Aspergillus fumigatus (strain ATCC MYA-4609 / CBS 101355 / FGSC A1100 / Af293) (Neosartorya fumigata).